The following is an 84-amino-acid chain: Agaphelin (84 aa).

The N-terminal stretch at 1 to 26 (MKMRVHLLAVSVLLVVLALQTTPAEA) is a signal peptide. Residues 29–82 (NSEMATCACQLIYRPVCASNNESYSNECVLKCASETPTGRSIGLHKVKDGNCNG) form the Kazal-like domain. Cystine bridges form between Cys35/Cys60, Cys37/Cys56, and Cys45/Cys80. Asn49 carries N-linked (GlcNAc...) asparagine glycosylation.

As to quaternary structure, interacts with human ELANE.

Its subcellular location is the secreted. In terms of biological role, functions as a slow and tight inhibitor of host neutrophil elastase (ELANE). Inhibits host proteinase 3 (PRTN3) and chymotrypsin. Does not inhibit other host proteases involved in coagulation or inflammation, such as cathepsin G (CTSG), trypsin, chymase, matriptase, beta-tryptase, kallikrein, urokinase-type plasminogen activator (PLAU), coagulation factors Xa (F10), XIa (F11), XIIa (F12), plasmin (PLG), thrombin (F2) and tissue-type plasminogen activator (PLAT). Inhibits host neutrophil chemotaxis induced by N-formylmethionine-leucyl-phenylalanine (fMLP) in vitro. Inhibits ELANE-mediated potentiation of platelet aggregation induced by CTSG in the host. Does not affect CTSG- or collagen-induced platelet aggregation. Blocks cleavage of tissue factor pathway inhibitor (TFPI) by ELANE in the host. Inhibits neutrophil-induced coagulation in the host by interfering with neutrophil extracellular traps (NET) formation. Exhibits anti-inflammatory activity. Reduces ischemia-induced activation of MAPK and NF-kappa-B pathways in the host. Decreases CCL2 and IL8 production in IL4- or lipopolysaccharide (LPS)-stimulated host epithelial cells. Reduces caspase-3 (CASP3)-dependent apoptosis in damaged host tissues. This Anopheles gambiae (African malaria mosquito) protein is Agaphelin.